Reading from the N-terminus, the 270-residue chain is Insulin-like growth factor-binding protein-like 1 (270 aa).

The signal sequence occupies residues 1 to 17 (MPRLPLLLLLLPSLARG). One can recognise an IGFBP N-terminal domain in the interval 26 to 101 (RHPECSPCQQ…PEGTGLCVCA (76 aa)). 7 cysteine pairs are disulfide-bonded: Cys30–Cys55, Cys33–Cys57, Cys38–Cys58, Cys44–Cys61, Cys69–Cys83, Cys77–Cys98, and Cys107–Cys143. Positions 87 to 145 (ASGTAPEGTGLCVCAQRGAVCGSDGRSYSSICALRLRARHAPRAHHGHLHKARDGPCEF) constitute a Kazal-like domain. Positions 147-251 (PVVLMPPRDI…GEAQSHGTVT (105 aa)) constitute an Ig-like C2-type domain. Asn158 carries N-linked (GlcNAc...) asparagine glycosylation. A disulfide bond links Cys168 and Cys235.

The protein resides in the secreted. Functionally, IGF-binding proteins prolong the half-life of IGFs and have been shown to either inhibit or stimulate the growth promoting effects of the IGFs in cell culture. They alter the interaction of IGFs with their cell surface receptors. The sequence is that of Insulin-like growth factor-binding protein-like 1 (Igfbpl1) from Mus musculus (Mouse).